The sequence spans 277 residues: tRNA U34 carboxymethyltransferase (277 aa).

Residues K46, W60, K65, G84, 106-108, 133-134, Y153, and R268 each bind carboxy-S-adenosyl-L-methionine; these read DPS and VE.

It belongs to the class I-like SAM-binding methyltransferase superfamily. CmoB family. Homotetramer.

It catalyses the reaction carboxy-S-adenosyl-L-methionine + 5-hydroxyuridine(34) in tRNA = 5-carboxymethoxyuridine(34) in tRNA + S-adenosyl-L-homocysteine + H(+). Catalyzes carboxymethyl transfer from carboxy-S-adenosyl-L-methionine (Cx-SAM) to 5-hydroxyuridine (ho5U) to form 5-carboxymethoxyuridine (cmo5U) at position 34 in tRNAs. The polypeptide is tRNA U34 carboxymethyltransferase (Wolinella succinogenes (strain ATCC 29543 / DSM 1740 / CCUG 13145 / JCM 31913 / LMG 7466 / NCTC 11488 / FDC 602W) (Vibrio succinogenes)).